The primary structure comprises 197 residues: Nucleoside triphosphate pyrophosphatase (197 aa).

Catalysis depends on aspartate 72, which acts as the Proton acceptor.

This sequence belongs to the Maf family. Requires a divalent metal cation as cofactor.

The protein resides in the cytoplasm. The catalysed reaction is a ribonucleoside 5'-triphosphate + H2O = a ribonucleoside 5'-phosphate + diphosphate + H(+). The enzyme catalyses a 2'-deoxyribonucleoside 5'-triphosphate + H2O = a 2'-deoxyribonucleoside 5'-phosphate + diphosphate + H(+). In terms of biological role, nucleoside triphosphate pyrophosphatase. May have a dual role in cell division arrest and in preventing the incorporation of modified nucleotides into cellular nucleic acids. This is Nucleoside triphosphate pyrophosphatase from Corynebacterium glutamicum (strain R).